The chain runs to 100 residues: Urease subunit gamma (100 aa).

It belongs to the urease gamma subunit family. Heterotrimer of UreA (gamma), UreB (beta) and UreC (alpha) subunits. Three heterotrimers associate to form the active enzyme.

It localises to the cytoplasm. The catalysed reaction is urea + 2 H2O + H(+) = hydrogencarbonate + 2 NH4(+). It functions in the pathway nitrogen metabolism; urea degradation; CO(2) and NH(3) from urea (urease route): step 1/1. The polypeptide is Urease subunit gamma (Streptomyces avermitilis (strain ATCC 31267 / DSM 46492 / JCM 5070 / NBRC 14893 / NCIMB 12804 / NRRL 8165 / MA-4680)).